The primary structure comprises 467 residues: Glutamate--tRNA ligase (467 aa).

Positions 9–19 (PSPTGYLHIGG) match the 'HIGH' region motif. The short motif at 237-241 (KLSKR) is the 'KMSKS' region element. ATP is bound at residue K240.

It belongs to the class-I aminoacyl-tRNA synthetase family. Glutamate--tRNA ligase type 1 subfamily. Monomer.

It localises to the cytoplasm. It carries out the reaction tRNA(Glu) + L-glutamate + ATP = L-glutamyl-tRNA(Glu) + AMP + diphosphate. Functionally, catalyzes the attachment of glutamate to tRNA(Glu) in a two-step reaction: glutamate is first activated by ATP to form Glu-AMP and then transferred to the acceptor end of tRNA(Glu). This is Glutamate--tRNA ligase from Xanthomonas euvesicatoria pv. vesicatoria (strain 85-10) (Xanthomonas campestris pv. vesicatoria).